We begin with the raw amino-acid sequence, 919 residues long: Valine--tRNA ligase (919 aa).

The short motif at 46–56 (PNVTGTLHMGH) is the 'HIGH' region element. The 'KMSKS' region signature appears at 528–532 (KMSKS). K531 serves as a coordination point for ATP. Residues 849–919 (LAGLVDIEAE…KTLEKKEALG (71 aa)) adopt a coiled-coil conformation.

It belongs to the class-I aminoacyl-tRNA synthetase family. ValS type 1 subfamily. In terms of assembly, monomer.

The protein localises to the cytoplasm. The catalysed reaction is tRNA(Val) + L-valine + ATP = L-valyl-tRNA(Val) + AMP + diphosphate. In terms of biological role, catalyzes the attachment of valine to tRNA(Val). As ValRS can inadvertently accommodate and process structurally similar amino acids such as threonine, to avoid such errors, it has a 'posttransfer' editing activity that hydrolyzes mischarged Thr-tRNA(Val) in a tRNA-dependent manner. The polypeptide is Valine--tRNA ligase (Francisella tularensis subsp. tularensis (strain SCHU S4 / Schu 4)).